Reading from the N-terminus, the 223-residue chain is DNA replication complex GINS protein SLD5 (223 aa).

An N-acetylmethionine modification is found at M1. N-acetylthreonine; in DNA replication complex GINS protein SLD5, N-terminally processed is present on T2. S12 and S16 each carry phosphoserine. Residues 166-223 (DLDSYVFLRVKERQENILVEPEADEQRDYVIDLEVGSQHLIRYKTIAPLVASGAVQLI) are important for GINS complex assembly.

It belongs to the GINS4/SLD5 family. Component of the CMG helicase complex, a hexameric ring of related MCM2-7 subunits stabilized by CDC45 and the tetrameric GINS complex. Associated with ORC2. Interacts with HELB. Highly abundant in testis. Weakly expressed in thymus and bone marrow.

The protein localises to the nucleus. The protein resides in the chromosome. It is found in the cytoplasm. Its function is as follows. Required for initiation of chromosomal DNA replication. Core component of CDC45-MCM-GINS (CMG) helicase, the molecular machine that unwinds template DNA during replication, and around which the replisome is built. The chain is DNA replication complex GINS protein SLD5 (Gins4) from Mus musculus (Mouse).